Consider the following 278-residue polypeptide: HTH-type transcriptional activator RhaS (278 aa).

The HTH araC/xylS-type domain occupies 174–272 (NLLLAWLEDH…NWSPRDIRQG (99 aa)). 2 DNA-binding regions (H-T-H motif) span residues 191-212 (DAVAEQFSLSLRTLHRQLKQQT) and 239-262 (VTDIAYRCGFSDSNHFSTLFRREF).

Binds DNA as a dimer.

The protein localises to the cytoplasm. Its function is as follows. Activates expression of the rhaBAD and rhaT operons. The sequence is that of HTH-type transcriptional activator RhaS from Escherichia coli O139:H28 (strain E24377A / ETEC).